The following is a 288-amino-acid chain: Bifunctional protein FolD (288 aa).

Residues 166–168 and Ile232 contribute to the NADP(+) site; that span reads GAS.

The protein belongs to the tetrahydrofolate dehydrogenase/cyclohydrolase family. As to quaternary structure, homodimer.

It catalyses the reaction (6R)-5,10-methylene-5,6,7,8-tetrahydrofolate + NADP(+) = (6R)-5,10-methenyltetrahydrofolate + NADPH. The catalysed reaction is (6R)-5,10-methenyltetrahydrofolate + H2O = (6R)-10-formyltetrahydrofolate + H(+). It participates in one-carbon metabolism; tetrahydrofolate interconversion. Functionally, catalyzes the oxidation of 5,10-methylenetetrahydrofolate to 5,10-methenyltetrahydrofolate and then the hydrolysis of 5,10-methenyltetrahydrofolate to 10-formyltetrahydrofolate. The polypeptide is Bifunctional protein FolD (Escherichia coli (strain UTI89 / UPEC)).